The primary structure comprises 609 residues: Threonine--tRNA ligase (609 aa).

Residues 215 to 506 are catalytic; the sequence is DHRIIGNEMK…LIEHTAGELP (292 aa). Zn(2+) is bound by residues C307, H358, and H483.

This sequence belongs to the class-II aminoacyl-tRNA synthetase family. Homodimer. It depends on Zn(2+) as a cofactor.

Its subcellular location is the cytoplasm. The enzyme catalyses tRNA(Thr) + L-threonine + ATP = L-threonyl-tRNA(Thr) + AMP + diphosphate + H(+). In terms of biological role, catalyzes the attachment of threonine to tRNA(Thr) in a two-step reaction: L-threonine is first activated by ATP to form Thr-AMP and then transferred to the acceptor end of tRNA(Thr). Also edits incorrectly charged L-seryl-tRNA(Thr). The chain is Threonine--tRNA ligase from Campylobacter hominis (strain ATCC BAA-381 / DSM 21671 / CCUG 45161 / LMG 19568 / NCTC 13146 / CH001A).